A 529-amino-acid chain; its full sequence is DNA-binding protein (529 aa).

The span at 1-17 shows a compositional bias: basic and acidic residues; sequence MASREEEQRETTPERGR. 2 disordered regions span residues 1-107 and 125-166; these read MASR…IVDS and PVLI…AESE. Basic residues predominate over residues 129–139; that stretch reads KHGKGGKRTVR. Residues 155-165 show a composition bias toward acidic residues; the sequence is EEEEEPSEAES. Phosphotyrosine; by host is present on Tyr195. Positions 284 and 286 each coordinate Zn(2+). Residues 297–331 form a flexible loop region; that stretch reads IEMDVTSENGQRALKEQSSKAKIVKNRWGRNVVQI. Zn(2+) is bound by residues Cys339, Cys355, Cys396, Cys398, Cys450, and Cys467. A C-terminal arm, DBP binding region spans residues 513 to 529; sequence VSLPVAHSDARQNPFDF.

Belongs to the adenoviridae E2A DNA-binding protein family. Homomultimerizes on viral ssDNA bound to pTP. Forms a initiation complex with viral polymerase, pTP and hosts NFIA and POU2F1/OCT1. Interacts with host SRCAP.

It is found in the host nucleus. Plays a role in the elongation phase of viral strand displacement replication by unwinding the template in an ATP-independent fashion, employing its capacity to form multimers. Also enhances the rate of initiation. Released from template upon second strand synthesis. Assembles in complex with viral pTP, viral pol, host NFIA and host POU2F1/OCT1 on viral origin of replication. Covers the whole ssDNA genome during synthesis. The complementary strand synthesis induces its relese from DNA template. May inhibit cellular transcription mediated by the interaction between host SRCAP and CBP. The chain is DNA-binding protein from Human adenovirus C serotype 5 (HAdV-5).